A 142-amino-acid chain; its full sequence is Protein NIM1-INTERACTING 1 (142 aa).

The interval 47–53 (DTFFKLI) is involved in NPR1/NIM1 interaction. Positions 60–64 (RKRRR) match the Nuclear localization signal motif. 2 disordered regions span residues 63–86 (RREE…RSGI) and 108–142 (MFVS…NLAL). Residues 110 to 141 (VSDHKEENTKVEQEEDQTEERNEDKALDLNLA) are a coiled coil. The span at 111 to 121 (SDHKEENTKVE) shows a compositional bias: basic and acidic residues.

Belongs to the NPR1-interactor family. Interacts with NPR1 C-terminal region.

It is found in the nucleus. In Arabidopsis thaliana (Mouse-ear cress), this protein is Protein NIM1-INTERACTING 1.